The chain runs to 265 residues: H-2 class II histocompatibility antigen, A-D beta chain (265 aa).

An N-terminal signal peptide occupies residues 1–27 (MALQIPSLLLSAAVVVLMVLSSPRTEG). The interval 28–122 (GNSERHFVVQ…PETSTSLRRL (95 aa)) is beta-1. Residues 28-226 (GNSERHFVVQ…RAQSESARSK (199 aa)) are Extracellular-facing. Intrachain disulfides connect cysteine 42–cysteine 106 and cysteine 145–cysteine 201. A glycan (N-linked (GlcNAc...) asparagine) is linked at asparagine 46. The segment at 123-216 (EQPNVAISLS…SLKSPITVEW (94 aa)) is beta-2. In terms of domain architecture, Ig-like C1-type spans 125-213 (PNVAISLSRT…EHPSLKSPIT (89 aa)). The tract at residues 217-226 (RAQSESARSK) is connecting peptide. The helical transmembrane segment at 227-247 (MLSGIGGCVLGVIFLGLGLFI) threads the bilayer. Over 248 to 265 (RHRSQKGPRGPPPAGLLQ) the chain is Cytoplasmic.

The protein belongs to the MHC class II family. Post-translationally, ubiquitinated in immature dendritic cells leading to down-regulation of MHC class II.

The protein resides in the membrane. This is H-2 class II histocompatibility antigen, A-D beta chain (H2-Ab1) from Mus musculus (Mouse).